The primary structure comprises 229 residues: uncharacterized protein (229 aa).

Residues 24-78 (LRKWRSIFNASQSDLARKLGISPSVISDYESGRRKPGTAFLKKFVCALIELDGER) enclose the HTH cro/C1-type domain. Positions 35–54 (QSDLARKLGISPSVISDYES) form a DNA-binding region, H-T-H motif.

This is an uncharacterized protein from Archaeoglobus fulgidus (strain ATCC 49558 / DSM 4304 / JCM 9628 / NBRC 100126 / VC-16).